The sequence spans 663 residues: MTDKRKYKKTVSFTRCTAIIFLTTKEVSKQKEEIRREIAREFDLPERKSKIATILKQEDQAYCICRSSDCSRFMIGCDGCEEWYHGDCIGITEKEAKHIKQYYCRRCKKENPELQTIFRLVATERAAASNAASTSLNAPGVGPSGAAPAAAPVASATTSQQAPPPTTAAAKRKNSSAREPKMGKRCGTCEGCRRPNCNQCDACRVRVGHKPRCIFRTCVVQAATVLKESQATQAGPSRKREKAAPKSRNVQVGPRAASPEIFLNPELQGIRQCYGPNCCSHARPQSKYCSDKCGFNLATKRIFQVLPQRLQEWNLTPSRAAEETRKHLDNIRHKQSLVRFALAELEKRSEELNMVVERAKRSSIDTLGSQDTADMEDEQSMYCITCGHEIHSRTAIKHMEKCFNKYESQASFGSIFKTRMEGNNMFCDFYNPASKTYCKRLRVLCPEHSKDPKVNDTDVCGSPLVNNVFNPTGEFCRAPKKNCFKHYAWEKIRRAEIDLERVRQWLKMDDLMEQERVMRQQLTSRANLLGLMLHSTYNHEVMDELVRKQQEHLVEFEKQRRRLAHQQQIQTQQKQYQEKQKLMLQQQQQQQQQQQQQQQQQQQQQLQQPQQQQQQQQQQQQEQQQLQLKPHHLQQLQLQLLQQQQKKAQIPQKTQIIYLQKKT.

The PHD-type zinc-finger motif lies at 60-110; the sequence is QAYCICRSSDCSRFMIGCDGCEEWYHGDCIGITEKEAKHIKQYYCRRCKKE. A compositionally biased stretch (low complexity) spans 134–161; it reads TSLNAPGVGPSGAAPAAAPVASATTSQQ. Residues 134-183 are disordered; sequence TSLNAPGVGPSGAAPAAAPVASATTSQQAPPPTTAAAKRKNSSAREPKMG. The CXXC-type zinc-finger motif lies at 175–219; it reads SSAREPKMGKRCGTCEGCRRPNCNQCDACRVRVGHKPRCIFRTCV. Cys186, Cys189, Cys192, Cys197, Cys200, Cys203, Cys213, and Cys218 together coordinate Zn(2+). A disordered region spans residues 230–254; sequence QATQAGPSRKREKAAPKSRNVQVGP. A Phosphoserine modification is found at Ser258.

As to quaternary structure, component of the SET1 complex, composed at least of the catalytic subunit Set1, wds/WDR5, Wdr82, Rbbp5, ash2, Cfp1/CXXC1, hcf and Dpy-30L1.

It is found in the nucleus. Component of the SET1 complex that specifically di- and trimethylates 'Lys-4' of histone H3. Essential for Set1 association with chromatin and trimethylation of histone H3 at 'Lys-4' at transcription puffs. Additionally, is critical for general chromosomal association of Set1. This chain is CXXC-type zinc finger protein 1 (Cfp1), found in Drosophila melanogaster (Fruit fly).